Reading from the N-terminus, the 292-residue chain is ATP synthase gamma chain (292 aa).

This sequence belongs to the ATPase gamma chain family. As to quaternary structure, F-type ATPases have 2 components, CF(1) - the catalytic core - and CF(0) - the membrane proton channel. CF(1) has five subunits: alpha(3), beta(3), gamma(1), delta(1), epsilon(1). CF(0) has three main subunits: a, b and c.

The protein localises to the cell inner membrane. Its function is as follows. Produces ATP from ADP in the presence of a proton gradient across the membrane. The gamma chain is believed to be important in regulating ATPase activity and the flow of protons through the CF(0) complex. This Maridesulfovibrio salexigens (strain ATCC 14822 / DSM 2638 / NCIMB 8403 / VKM B-1763) (Desulfovibrio salexigens) protein is ATP synthase gamma chain.